Consider the following 194-residue polypeptide: Putative manganese efflux pump MntP (194 aa).

The next 6 helical transmembrane spans lie at 3–23, 37–57, 65–85, 112–132, 139–159, and 170–190; these read PITI…AAIG, LYVA…GWLL, IATF…IHMI, LAAT…SLAF, IVAA…VMLG, and AEIV…YEHL.

Belongs to the MntP (TC 9.B.29) family.

Its subcellular location is the cell inner membrane. Functionally, probably functions as a manganese efflux pump. The polypeptide is Putative manganese efflux pump MntP (Xylella fastidiosa (strain 9a5c)).